The chain runs to 195 residues: N-(5'-phosphoribosyl)anthranilate isomerase (195 aa).

Belongs to the TrpF family.

The catalysed reaction is N-(5-phospho-beta-D-ribosyl)anthranilate = 1-(2-carboxyphenylamino)-1-deoxy-D-ribulose 5-phosphate. Its pathway is amino-acid biosynthesis; L-tryptophan biosynthesis; L-tryptophan from chorismate: step 3/5. The polypeptide is N-(5'-phosphoribosyl)anthranilate isomerase (Streptococcus gordonii (strain Challis / ATCC 35105 / BCRC 15272 / CH1 / DL1 / V288)).